Reading from the N-terminus, the 224-residue chain is Homeobox protein Hox-B6 (224 aa).

The Antp-type hexapeptide motif lies at 127 to 132 (VYPWMQ). Positions 146–205 (GRRGRQTYTRYQTLELEKEFHYNRYLTRRRRIEIAHALCLTERQIKIWFQNRRMKWKKES) form a DNA-binding region, homeobox. At serine 214 the chain carries Phosphoserine.

The protein belongs to the Antp homeobox family.

Its subcellular location is the nucleus. Functionally, sequence-specific transcription factor which is part of a developmental regulatory system that provides cells with specific positional identities on the anterior-posterior axis. In Homo sapiens (Human), this protein is Homeobox protein Hox-B6 (HOXB6).